The primary structure comprises 331 residues: 4-hydroxy-3-methylbut-2-enyl diphosphate reductase (331 aa).

Position 12 (cysteine 12) interacts with [4Fe-4S] cluster. 2 residues coordinate (2E)-4-hydroxy-3-methylbut-2-enyl diphosphate: histidine 43 and histidine 81. Dimethylallyl diphosphate contacts are provided by histidine 43 and histidine 81. The isopentenyl diphosphate site is built by histidine 43 and histidine 81. Cysteine 103 serves as a coordination point for [4Fe-4S] cluster. Histidine 131 lines the (2E)-4-hydroxy-3-methylbut-2-enyl diphosphate pocket. Histidine 131 lines the dimethylallyl diphosphate pocket. Histidine 131 lines the isopentenyl diphosphate pocket. Glutamate 133 (proton donor) is an active-site residue. (2E)-4-hydroxy-3-methylbut-2-enyl diphosphate is bound at residue threonine 170. Cysteine 198 is a binding site for [4Fe-4S] cluster. Residues serine 226, asparagine 228, and serine 271 each coordinate (2E)-4-hydroxy-3-methylbut-2-enyl diphosphate. Residues serine 226, asparagine 228, and serine 271 each contribute to the dimethylallyl diphosphate site. Serine 226, asparagine 228, and serine 271 together coordinate isopentenyl diphosphate.

The protein belongs to the IspH family. The cofactor is [4Fe-4S] cluster.

It carries out the reaction isopentenyl diphosphate + 2 oxidized [2Fe-2S]-[ferredoxin] + H2O = (2E)-4-hydroxy-3-methylbut-2-enyl diphosphate + 2 reduced [2Fe-2S]-[ferredoxin] + 2 H(+). It catalyses the reaction dimethylallyl diphosphate + 2 oxidized [2Fe-2S]-[ferredoxin] + H2O = (2E)-4-hydroxy-3-methylbut-2-enyl diphosphate + 2 reduced [2Fe-2S]-[ferredoxin] + 2 H(+). Its pathway is isoprenoid biosynthesis; dimethylallyl diphosphate biosynthesis; dimethylallyl diphosphate from (2E)-4-hydroxy-3-methylbutenyl diphosphate: step 1/1. The protein operates within isoprenoid biosynthesis; isopentenyl diphosphate biosynthesis via DXP pathway; isopentenyl diphosphate from 1-deoxy-D-xylulose 5-phosphate: step 6/6. Its function is as follows. Catalyzes the conversion of 1-hydroxy-2-methyl-2-(E)-butenyl 4-diphosphate (HMBPP) into a mixture of isopentenyl diphosphate (IPP) and dimethylallyl diphosphate (DMAPP). Acts in the terminal step of the DOXP/MEP pathway for isoprenoid precursor biosynthesis. The polypeptide is 4-hydroxy-3-methylbut-2-enyl diphosphate reductase (Listeria monocytogenes serotype 4b (strain CLIP80459)).